Here is a 218-residue protein sequence, read N- to C-terminus: Carnitine transport permease protein OpuCB (218 aa).

An ABC transmembrane type-1 domain is found at 19–198 (TWQHLFISLS…ILALVVEFAL (180 aa)). 5 helical membrane passes run 23 to 43 (LFISLSAVILGIAVAVPTGIL), 48 to 68 (PKVANFVIGVVSVLQTVPSLA), 79 to 101 (VGTLPAIIALFIYALLPILRNTF), 149 to 169 (VIAWATLASYIGAGGLGDFIF), and 179 to 199 (LILGGAIPVTILALVVEFALG).

Belongs to the binding-protein-dependent transport system permease family. The complex is composed of two ATP-binding proteins (OpuCA), two transmembrane proteins (OpuCB and OpuCD) and a solute-binding protein (OpuCC).

Its subcellular location is the cell membrane. Its function is as follows. Part of the ABC transporter complex OpuCABCD involved in carnitine uptake. Probably responsible for the translocation of the substrate across the membrane. Involved, with BetL and GbuABC, in osmoprotection and cryoprotection of Listeria. This is Carnitine transport permease protein OpuCB (opuCB) from Listeria monocytogenes.